A 169-amino-acid polypeptide reads, in one-letter code: Small ribosomal subunit protein bS16 (169 aa).

Residues 114-169 (AEGPTAEAITEKRRKAKEEAEAKAAAEAEAAEKAEAEAAEKAAAEAAEESEEASAE) are disordered. Positions 129–156 (AKEEAEAKAAAEAEAAEKAEAEAAEKAA) are enriched in basic and acidic residues. The span at 159–169 (AAEESEEASAE) shows a compositional bias: acidic residues.

It belongs to the bacterial ribosomal protein bS16 family.

This is Small ribosomal subunit protein bS16 from Corynebacterium urealyticum (strain ATCC 43042 / DSM 7109).